The chain runs to 547 residues: Solute carrier family 22 member 25 (547 aa).

Over 1–9 (MAFQDLLDQ) the chain is Cytoplasmic. A helical membrane pass occupies residues 10–30 (VGGLGRFQILQMVFLIMFNVI). Over 31–145 (VYHQTQLENF…DLVCESQPLN (115 aa)) the chain is Extracellular. N-linked (GlcNAc...) asparagine glycosylation is found at asparagine 56 and asparagine 102. Residues 146 to 166 (SVAKFLFMAGMMVGGNLYGHL) form a helical membrane-spanning segment. At 167–177 (SDRFGRKFVLR) the chain is on the cytoplasmic side. The helical transmembrane segment at 178-198 (WSYLQLAIVGTCAAFAPTILV) threads the bilayer. At 199-204 (YCSLRF) the chain is on the extracellular side. Residues 205–225 (LAGAATFSIIVNTVLLIVEWI) traverse the membrane as a helical segment. The Cytoplasmic portion of the chain corresponds to 226 to 234 (THQFCAMAL). Residues 235–255 (TLTLCAASIGHITLGSLAFVI) form a helical membrane-spanning segment. Topologically, residues 256-259 (RDQC) are extracellular. A helical transmembrane segment spans residues 260–280 (ILQLVMSAPCFVFFLFSRWLA). At 281-349 (ESARWLIINN…LLRIPNICKR (69 aa)) the chain is on the cytoplasmic side. Residues 350-370 (ICFLSFVRFASTIPFWGLTLH) form a helical membrane-spanning segment. At 371–377 (LQHLGNN) the chain is on the extracellular side. A helical transmembrane segment spans residues 378 to 398 (VFLLQTLFGAVTLLANCVAPW). Residues 399-406 (ALNHMSRR) are Cytoplasmic-facing. The helical transmembrane segment at 407 to 427 (LSQMLLMFLLATCLLAIIFVP) threads the bilayer. Over 428 to 434 (QEMQTLR) the chain is Extracellular. A helical membrane pass occupies residues 435 to 455 (VVLATLGVGAASLGITCSTAQ). Topologically, residues 456-470 (ENELIPSIIRGRATG) are cytoplasmic. Residues 471–491 (ITGNFANIGGALASLMMILSI) form a helical membrane-spanning segment. The Extracellular portion of the chain corresponds to 492–494 (YSR). The helical transmembrane segment at 495 to 515 (PLPWIIYGVFAILSGLVVLLL) threads the bilayer. Residues 516–547 (PETRNQPLLDSIQDVENEGVNSLAAPQRSSVL) lie on the Cytoplasmic side of the membrane.

The protein belongs to the major facilitator (TC 2.A.1) superfamily. Organic cation transporter (TC 2.A.1.19) family. In terms of tissue distribution, expressed exclusively in liver in both embryo and adult.

Its subcellular location is the membrane. This Homo sapiens (Human) protein is Solute carrier family 22 member 25.